A 787-amino-acid chain; its full sequence is Endonuclease MutS2 (787 aa).

An ATP-binding site is contributed by 334 to 341; sequence GPNTGGKT. The tract at residues 685-709 is disordered; that stretch reads KAQDPAKSAKQPRASVKRSGSSGMS. Positions 712–787 constitute a Smr domain; the sequence is LDLRGHRYEE…GDGSTVVHFK (76 aa).

This sequence belongs to the DNA mismatch repair MutS family. MutS2 subfamily. As to quaternary structure, homodimer. Binds to stalled ribosomes, contacting rRNA.

In terms of biological role, endonuclease that is involved in the suppression of homologous recombination and thus may have a key role in the control of bacterial genetic diversity. Its function is as follows. Acts as a ribosome collision sensor, splitting the ribosome into its 2 subunits. Detects stalled/collided 70S ribosomes which it binds and splits by an ATP-hydrolysis driven conformational change. Acts upstream of the ribosome quality control system (RQC), a ribosome-associated complex that mediates the extraction of incompletely synthesized nascent chains from stalled ribosomes and their subsequent degradation. Probably generates substrates for RQC. The protein is Endonuclease MutS2 of Levilactobacillus brevis (strain ATCC 367 / BCRC 12310 / CIP 105137 / JCM 1170 / LMG 11437 / NCIMB 947 / NCTC 947) (Lactobacillus brevis).